Reading from the N-terminus, the 195-residue chain is MDNQLFFKSLIATLPKWIHKCQTSKHENILYTNPNSLFQLLYFLKYHTNTRFKVLIDICGVDYPSRKRRFEVVYNLLSIDYNTRIRILTSVDEITPICSVVSIFPSAGWWERETWDMFGVYFSNHPDLRRILTDYGFEGHPLRKDFPLSGYVEVRYDDSEKRVVSEPIEMTQEFRYFDFASPWEQMSRSDESNQK.

It belongs to the complex I 30 kDa subunit family. As to quaternary structure, complex I is composed of about 45 different subunits. This is a component of the iron-sulfur (IP) fragment of the enzyme.

Its subcellular location is the mitochondrion inner membrane. The enzyme catalyses a ubiquinone + NADH + 5 H(+)(in) = a ubiquinol + NAD(+) + 4 H(+)(out). In terms of biological role, core subunit of the mitochondrial membrane respiratory chain NADH dehydrogenase (Complex I) that is believed to belong to the minimal assembly required for catalysis. Complex I functions in the transfer of electrons from NADH to the respiratory chain. The immediate electron acceptor for the enzyme is believed to be ubiquinone. In Marchantia polymorpha (Common liverwort), this protein is NADH dehydrogenase [ubiquinone] iron-sulfur protein 3 (NAD9).